Reading from the N-terminus, the 238-residue chain is tRNA (guanine-N(7)-)-methyltransferase (238 aa).

4 residues coordinate S-adenosyl-L-methionine: E68, E93, D120, and D143. D143 is an active-site residue. Substrate contacts are provided by residues K147, D179, and 216–219; that span reads TKFE.

The protein belongs to the class I-like SAM-binding methyltransferase superfamily. TrmB family.

The catalysed reaction is guanosine(46) in tRNA + S-adenosyl-L-methionine = N(7)-methylguanosine(46) in tRNA + S-adenosyl-L-homocysteine. The protein operates within tRNA modification; N(7)-methylguanine-tRNA biosynthesis. In terms of biological role, catalyzes the formation of N(7)-methylguanine at position 46 (m7G46) in tRNA. The chain is tRNA (guanine-N(7)-)-methyltransferase from Shewanella putrefaciens (strain CN-32 / ATCC BAA-453).